We begin with the raw amino-acid sequence, 37 residues long: Large ribosomal subunit protein bL36 (37 aa).

It belongs to the bacterial ribosomal protein bL36 family.

This Thermosynechococcus vestitus (strain NIES-2133 / IAM M-273 / BP-1) protein is Large ribosomal subunit protein bL36.